Consider the following 308-residue polypeptide: Glutathione synthetase (308 aa).

Positions 120 to 304 constitute an ATP-grasp domain; sequence KLGALRFNNL…LADQVIARLL (185 aa). Residue 146–202 coordinates ATP; sequence AREQEEVVLKPLGGRAGQGLVRVAGAAPGLEALLELVTDQEQLPVMVQRFLPAVIEG. Positions 275 and 277 each coordinate Mg(2+).

It belongs to the prokaryotic GSH synthase family. Mg(2+) serves as cofactor. It depends on Mn(2+) as a cofactor.

It catalyses the reaction gamma-L-glutamyl-L-cysteine + glycine + ATP = glutathione + ADP + phosphate + H(+). The protein operates within sulfur metabolism; glutathione biosynthesis; glutathione from L-cysteine and L-glutamate: step 2/2. This chain is Glutathione synthetase, found in Prochlorococcus marinus (strain MIT 9313).